The primary structure comprises 311 residues: MTALSPIPVFDAADTAALLAYPALLATLGQAVADYAAGEIVSPERLVVPLQAGGVMLSMPSSARDLATHKLVNVCPGNGARGLPTILGQVTAYDASTGEMRFALDGPTVTGRRTAAVTALGIQALHGAAPRDILLIGTGKQAANHAEALAAIFPEARLHVRGTSADSAAAFCAAHRAQAPRLVPLDGDAIPDAIDVVVTLTTSRTPVYREAAREGRLVVGVGAFTADAAEIDANTVRASRLVVDDPAGARHEAGDLIVAQVDWQHVASLADVLGGTFDRSGPLLFKSVGCAAWDLAACRTARDALAARRAG.

It belongs to the ornithine cyclodeaminase/mu-crystallin family. Homodimer.

The enzyme catalyses L-pipecolate + NAD(+) = Delta(1)-piperideine-2-carboxylate + NADH + H(+). The catalysed reaction is L-pipecolate + NADP(+) = Delta(1)-piperideine-2-carboxylate + NADPH + H(+). It catalyses the reaction L-proline + NAD(+) = 1-pyrroline-2-carboxylate + NADH + H(+). It carries out the reaction L-proline + NADP(+) = 1-pyrroline-2-carboxylate + NADPH + H(+). The protein operates within amino-acid degradation. Functionally, catalyzes the reduction of both Delta(1)-pyrroline-2-carboxylate (Pyr2C) and Delta(1)-piperideine-2-carboxylate (Pip2C) to L-proline and L-pipecolate, respectively, using NADPH or NADH as the electron donor. Can also catalyze the reverse oxidation reactions, albeit at a much lower rate. Together with LhpH, is involved in a trans-3-hydroxy-L-proline (t3LHyp) degradation pathway to L-proline, which allows A.brasilense to grow on t3LHyp as a sole carbon source. Also appears to be involved in D-proline and D-lysine metabolism. Does not show ornithine cyclodeaminase (OCD) activity. The polypeptide is Delta(1)-pyrroline-2-carboxylate/Delta(1)-piperideine-2-carboxylate reductase (Azospirillum brasilense).